The following is a 167-amino-acid chain: Peptide deformylase (167 aa).

The Fe cation site is built by Cys-90 and His-132. Glu-133 is a catalytic residue. His-136 serves as a coordination point for Fe cation.

Belongs to the polypeptide deformylase family. Requires Fe(2+) as cofactor.

The catalysed reaction is N-terminal N-formyl-L-methionyl-[peptide] + H2O = N-terminal L-methionyl-[peptide] + formate. Its function is as follows. Removes the formyl group from the N-terminal Met of newly synthesized proteins. Requires at least a dipeptide for an efficient rate of reaction. N-terminal L-methionine is a prerequisite for activity but the enzyme has broad specificity at other positions. The polypeptide is Peptide deformylase (Dehalococcoides mccartyi (strain ATCC BAA-2100 / JCM 16839 / KCTC 5957 / BAV1)).